The chain runs to 217 residues: Probable GTP-binding protein EngB (217 aa).

In terms of domain architecture, EngB-type G spans 40-217; sequence DVPEIAFAGR…RAAVLQDAMG (178 aa). GTP is bound by residues 48–55, 75–79, 95–98, 162–165, and 196–198; these read GRSNVGKS, GRTQE, DMPG, TKAD, and TSS. Mg(2+) contacts are provided by Ser-55 and Thr-77.

The protein belongs to the TRAFAC class TrmE-Era-EngA-EngB-Septin-like GTPase superfamily. EngB GTPase family. Requires Mg(2+) as cofactor.

Functionally, necessary for normal cell division and for the maintenance of normal septation. The chain is Probable GTP-binding protein EngB from Novosphingobium aromaticivorans (strain ATCC 700278 / DSM 12444 / CCUG 56034 / CIP 105152 / NBRC 16084 / F199).